The chain runs to 235 residues: Purine nucleoside phosphorylase DeoD-type (235 aa).

Residue H4 coordinates a purine D-ribonucleoside. Residues G20, R24, R43, and 87–90 each bind phosphate; that span reads RVGT. Residues 180–182 and 204–205 contribute to the a purine D-ribonucleoside site; these read EME and SD. The active-site Proton donor is the D205.

This sequence belongs to the PNP/UDP phosphorylase family. As to quaternary structure, homohexamer; trimer of homodimers.

It catalyses the reaction a purine D-ribonucleoside + phosphate = a purine nucleobase + alpha-D-ribose 1-phosphate. The catalysed reaction is a purine 2'-deoxy-D-ribonucleoside + phosphate = a purine nucleobase + 2-deoxy-alpha-D-ribose 1-phosphate. Catalyzes the reversible phosphorolytic breakdown of the N-glycosidic bond in the beta-(deoxy)ribonucleoside molecules, with the formation of the corresponding free purine bases and pentose-1-phosphate. The protein is Purine nucleoside phosphorylase DeoD-type of Oceanobacillus iheyensis (strain DSM 14371 / CIP 107618 / JCM 11309 / KCTC 3954 / HTE831).